The sequence spans 1213 residues: SWI/SNF complex subunit SMARCC2 (1213 aa).

The interval 1-274 (MAVRKKDGGP…PVSRRKKISA (274 aa)) is marR-like, BRCT and chromo domains module. One can recognise a MarR-like domain in the interval 10 to 136 (PNVKYYEAAD…IEKSLVQNNC (127 aa)). The BRCT; N-terminus domain occupies 140-183 (PNIFLCPEIEPKLLGKLKDIVKRHQGTISEDKSNASHVVYPVPG). A Chromo domain is found at 189-217 (EWVRPVMKRDKQVLLHWGYYPDSYDTWIP). The BRCT; C-terminus domain maps to 233 to 257 (KPRKVHAKWILDTDTFNEWMNEEDY). A disordered region spans residues 256–413 (DYEVSDDKSP…GEQTKNPDLH (158 aa)). Residues 275–284 (KTLTDEVNSP) show a composition bias toward polar residues. A phosphoserine mark is found at serine 283, serine 286, serine 302, serine 304, and serine 306. Lysine 312 is subject to N6-(ADP-ribosyl)lysine. Lysine 326 bears the N6-acetyllysine mark. Over residues 331 to 344 (HREEEQEDLTKDMD) the composition is skewed to basic and acidic residues. Phosphoserine is present on residues serine 347 and serine 387. The segment covering 379 to 398 (DLDEQDDESMETTGKDEDEN) has biased composition (acidic residues). The region spanning 424-521 (IIIPSYAAWF…YQVDAESRPT (98 aa)) is the SWIRM domain. Residues lysine 564, lysine 566, lysine 568, and lysine 592 each participate in a glycyl lysine isopeptide (Lys-Gly) (interchain with G-Cter in SUMO2) cross-link. Residues 596–647 (SATREWTEQETLLLLEALEMYKDDWNKVSEHVGSRTQDECILHFLRLPIEDP) enclose the SANT domain. Residue lysine 704 forms a Glycyl lysine isopeptide (Lys-Gly) (interchain with G-Cter in SUMO2) linkage. The segment at 724-848 (KVTGKADPAF…AEPEGERKTK (125 aa)) is disordered. Basic and acidic residues predominate over residues 747 to 777 (EPERIEESGTEEARPEGQAADEKKEPKEPRE). Lysine 787 participates in a covalent cross-link: Glycyl lysine isopeptide (Lys-Gly) (interchain with G-Cter in SUMO2). Residues 788–848 (EEISEVPKKD…AEPEGERKTK (61 aa)) are compositionally biased toward basic and acidic residues. Serine 813 is subject to Phosphoserine. Lysine 848 is covalently cross-linked (Glycyl lysine isopeptide (Lys-Gly) (interchain with G-Cter in SUMO2)). The stretch at 907 to 934 (EELETIMDREREALEYQRQQLLADRQAF) forms a coiled coil. Disordered stretches follow at residues 947–1073 (RQQH…HPGV) and 1181–1213 (LPSA…PPPQ). Over residues 949–962 (QHFQQMHQQQQQQP) the composition is skewed to low complexity. Pro residues predominate over residues 963–974 (PTLPPGSQPIPP). A compositionally biased stretch (low complexity) spans 975–1033 (TGAAGPPTVHGLAVPPAAVASAPPGSGAPPGSLGPSEQIGQAGTTAGPQQPQQAGAPQP). 2 stretches are compositionally biased toward pro residues: residues 1034 to 1060 (GAVP…PPSM) and 1185 to 1201 (SPLP…PTAP).

It belongs to the SMARCC family. As to quaternary structure, component of the multiprotein chromatin-remodeling complexes SWI/SNF: SWI/SNF-A (BAF), SWI/SNF-B (PBAF) and related complexes. The canonical complex contains a catalytic subunit (either SMARCA4/BRG1/BAF190A or SMARCA2/BRM/BAF190B) and at least SMARCE1, ACTL6A/BAF53, SMARCC1/BAF155, SMARCC2/BAF170, and SMARCB1/SNF5/BAF47. Other subunits specific to each of the complexes may also be present permitting several possible combinations developmentally and tissue specific. Component of the BAF complex, which includes at least actin (ACTB), ARID1A/BAF250A, ARID1B/BAF250B, SMARCA2/BRM, SMARCA4/BRG1, ACTL6A/BAF53, ACTL6B/BAF53B, SMARCE1/BAF57, SMARCC1/BAF155, SMARCC2/BAF170, SMARCB1/SNF5/INI1, and one or more SMARCD1/BAF60A, SMARCD2/BAF60B, or SMARCD3/BAF60C. In muscle cells, the BAF complex also contains DPF3. Component of neural progenitors-specific chromatin remodeling complex (npBAF complex) composed of at least, ARID1A/BAF250A or ARID1B/BAF250B, SMARCD1/BAF60A, SMARCD3/BAF60C, SMARCA2/BRM/BAF190B, SMARCA4/BRG1/BAF190A, SMARCB1/BAF47, SMARCC1/BAF155, SMARCE1/BAF57, SMARCC2/BAF170, PHF10/BAF45A, ACTL6A/BAF53A and actin. Component of neuron-specific chromatin remodeling complex (nBAF complex) composed of at least, ARID1A/BAF250A or ARID1B/BAF250B, SMARCD1/BAF60A, SMARCD3/BAF60C, SMARCA2/BRM/BAF190B, SMARCA4/BRG1/BAF190A, SMARCB1/BAF47, SMARCC1/BAF155, SMARCE1/BAF57, SMARCC2/BAF170, DPF1/BAF45B, DPF3/BAF45C, ACTL6B/BAF53B and actin. Component of the SWI/SNF-B (PBAF) chromatin remodeling complex, at least composed of SMARCA4/BRG1, SMARCB1/BAF47/SNF5, ACTL6A/BAF53A or ACTL6B/BAF53B, SMARCE1/BAF57, SMARCD1/BAF60A, SMARCD2/BAF60B, perhaps SMARCD3/BAF60C, SMARCC1/BAF155, SMARCC2/BAF170, PBRM1/BAF180, ARID2/BAF200 and actin. May also interact with the SIN3A histone deacetylase transcription repressor complex in conjunction with SMARCA2 and SMARCA4. Interacts with SMARD1. Interacts with KDM6B. Interaction with RCOR1. Interacts with DPF2. Interacts with ERCC6. Interacts with FOS. Mono-ADP-ribosylation at Lys-312 by SIRT6 promotes recruitment to the enhancer region of the Heme oxygenase-1 (HO-1) locus, leading to transcription activation of the locus.

It is found in the nucleus. In terms of biological role, involved in transcriptional activation and repression of select genes by chromatin remodeling (alteration of DNA-nucleosome topology). Component of SWI/SNF chromatin remodeling complexes that carry out key enzymatic activities, changing chromatin structure by altering DNA-histone contacts within a nucleosome in an ATP-dependent manner. Can stimulate the ATPase activity of the catalytic subunit of these complexes. May be required for CoREST dependent repression of neuronal specific gene promoters in non-neuronal cells. Belongs to the neural progenitors-specific chromatin remodeling complex (npBAF complex) and the neuron-specific chromatin remodeling complex (nBAF complex). During neural development a switch from a stem/progenitor to a postmitotic chromatin remodeling mechanism occurs as neurons exit the cell cycle and become committed to their adult state. The transition from proliferating neural stem/progenitor cells to postmitotic neurons requires a switch in subunit composition of the npBAF and nBAF complexes. As neural progenitors exit mitosis and differentiate into neurons, npBAF complexes which contain ACTL6A/BAF53A and PHF10/BAF45A, are exchanged for homologous alternative ACTL6B/BAF53B and DPF1/BAF45B or DPF3/BAF45C subunits in neuron-specific complexes (nBAF). The npBAF complex is essential for the self-renewal/proliferative capacity of the multipotent neural stem cells. The nBAF complex along with CREST plays a role regulating the activity of genes essential for dendrite growth. Critical regulator of myeloid differentiation, controlling granulocytopoiesis and the expression of genes involved in neutrophil granule formation. The chain is SWI/SNF complex subunit SMARCC2 (Smarcc2) from Mus musculus (Mouse).